The primary structure comprises 790 residues: Disintegrin and metalloproteinase domain-containing protein 30 (790 aa).

An N-terminal signal peptide occupies residues 1–27 (MRSVQIFLSQCRLLLLLVPTMLLKSLG). A propeptide spanning residues 28 to 198 (EDVIFHPEGE…KARLRDFPGS (171 aa)) is cleaved from the precursor. A Cysteine switch motif is present at residues 170–177 (QVCGLSDD). C172 contacts Zn(2+). The Extracellular segment spans residues 199–687 (YKHPKYLELI…LRGAIPSSIW (489 aa)). The Peptidase M12B domain maps to 203–393 (KYLELILLFD…SGATCLNNIP (191 aa)). An N-linked (GlcNAc...) asparagine glycan is attached at N222. 3 disulfides stabilise this stretch: C313/C388, C353/C373, and C355/C361. H338 is a binding site for Zn(2+). E339 is a catalytic residue. Zn(2+) is bound by residues H342 and H348. N-linked (GlcNAc...) asparagine glycans are attached at residues N372, N438, N473, and N625. One can recognise a Disintegrin domain in the interval 399-485 (LKRCGNKIVE…SCPNDVYKQD (87 aa)). C457 and C477 are oxidised to a cystine. Positions 629–663 (LQFDCLPEKCNTRGVCNNRKNCHCMYGWAPPFCEE) constitute an EGF-like domain. 3 disulfides stabilise this stretch: C633–C644, C638–C650, and C652–C661. A helical transmembrane segment spans residues 688 to 708 (VVSIIMFRLILLILSVVFVFF). The Cytoplasmic portion of the chain corresponds to 709–790 (RQVIGNHLKP…KAKSVKKQKK (82 aa)). Residues 720–779 (QEKMPLSKAKTEQEESKTKTVQEESKTKTGQEESEAKTGQEESKAKTGQEESKANIESKR) are compositionally biased toward basic and acidic residues. The segment at 720-790 (QEKMPLSKAK…KAKSVKKQKK (71 aa)) is disordered. Tandem repeats lie at residues 732–740 (QEESKTKTV), 741–749 (QEESKTKTG), 750–758 (QEESEAKTG), 759–767 (QEESKAKTG), and 768–776 (QEESKANIE). The 5 X 9 AA approximate repeats stretch occupies residues 732–776 (QEESKTKTVQEESKTKTGQEESEAKTGQEESKAKTGQEESKANIE). Residues 780–790 (PKAKSVKKQKK) are compositionally biased toward basic residues.

In terms of assembly, interacts with CTSD; this leads to activation of CTSD. The cofactor is Zn(2+). In terms of tissue distribution, expressed in brain neurons (at protein level). Expressed in testis.

The protein resides in the late endosome membrane. Plays a role in lysosomal amyloid precursor protein (APP) processing by cleaving and activating CTSD/cathepsin D which leads to APP degradation. This chain is Disintegrin and metalloproteinase domain-containing protein 30 (ADAM30), found in Homo sapiens (Human).